Reading from the N-terminus, the 227-residue chain is Large ribosomal subunit protein uL10c (227 aa).

A chloroplast-targeting transit peptide spans 1–47 (MEATFFTLPSSTSHSYPFSLKSHFNNSLTLPTHPHFKPKSKNLTIRS).

This sequence belongs to the universal ribosomal protein uL10 family. Part of the 50S ribosomal subunit.

The protein localises to the plastid. Its subcellular location is the chloroplast. Its function is as follows. This protein binds directly to 23S ribosomal RNA. In Nicotiana tabacum (Common tobacco), this protein is Large ribosomal subunit protein uL10c (RPL10).